A 405-amino-acid polypeptide reads, in one-letter code: Teichoic acid D-alanyltransferase (405 aa).

Over methionine 1–asparagine 9 the chain is Extracellular. The helical transmembrane segment at proline 10 to lysine 29 threads the bilayer. The Cytoplasmic portion of the chain corresponds to glycine 30 to methionine 33. The chain crosses the membrane as a helical span at residues histidine 34 to phenylalanine 49. Topologically, residues aspartate 50–lysine 53 are extracellular. The chain crosses the membrane as a helical span at residues tryptophan 54–arginine 80. Residues glutamate 81–serine 86 lie on the Cytoplasmic side of the membrane. A helical membrane pass occupies residues threonine 87–glutamine 111. At histidine 112–glycine 121 the chain is on the extracellular side. The helical transmembrane segment at isoleucine 122–aspartate 138 threads the bilayer. Over glycine 139–asparagine 145 the chain is Cytoplasmic. The stretch at methionine 146 to aspartate 175 is an intramembrane region. At arginine 176 to aspartate 179 the chain is on the cytoplasmic side. Residues proline 180–serine 223 form a helical membrane-spanning segment. Over arginine 224–serine 232 the chain is Extracellular. Residues tryptophan 233–methionine 264 traverse the membrane as a helical segment. Residues glycine 265–lysine 274 lie on the Cytoplasmic side of the membrane. Residues proline 275–histidine 310 lie within the membrane without spanning it. At lysine 311–serine 315 the chain is on the cytoplasmic side. Residues arginine 316 to histidine 335 traverse the membrane as a helical segment. The active site involves histidine 335. Residues glycine 336–threonine 338 lie on the Extracellular side of the membrane. The chain crosses the membrane as a helical span at residues tryptophan 339–asparagine 372. The Cytoplasmic segment spans residues arginine 373–proline 378. Residues serine 379–leucine 399 traverse the membrane as a helical segment. Residues aspartate 400–histidine 405 are Extracellular-facing.

Belongs to the membrane-bound acyltransferase family.

It localises to the cell membrane. The protein operates within cell wall biogenesis; lipoteichoic acid biosynthesis. Functionally, O-acyltransferase that catalyzes D-alanylation of both teichoic acid and lipoteichoic acid (LTA). D-alanylation of LTA plays an important role in modulating the properties of the cell wall in Gram-positive bacteria, influencing the net charge of the cell wall. Catalyzes D-alanylation from DltC carrier protein. The protein is Teichoic acid D-alanyltransferase of Lacticaseibacillus rhamnosus (Lactobacillus rhamnosus).